Reading from the N-terminus, the 84-residue chain is Large ribosomal subunit protein bL27 (84 aa).

Residues 1-25 are disordered; it reads MAHKKAGGSSRNGRDSNGQRRGVKR.

The protein belongs to the bacterial ribosomal protein bL27 family.

This is Large ribosomal subunit protein bL27 from Desulfatibacillum aliphaticivorans.